The primary structure comprises 142 residues: Large ribosomal subunit protein uL13 (142 aa).

Belongs to the universal ribosomal protein uL13 family. As to quaternary structure, part of the 50S ribosomal subunit.

Its function is as follows. This protein is one of the early assembly proteins of the 50S ribosomal subunit, although it is not seen to bind rRNA by itself. It is important during the early stages of 50S assembly. This Helicobacter hepaticus (strain ATCC 51449 / 3B1) protein is Large ribosomal subunit protein uL13.